A 576-amino-acid chain; its full sequence is MVTRLADIFKRLRLGRDYEDIIDTVPIDDGLQANIRNIEEKSKELNKSLYGKQQAYAEPFLEVMDTNPEFRTKRSYMKNSDNLHDVLKQFGNNPILNAIILTRSNQVAMYCQPSRYNERGLGFEVRMRDLDAEPGKKEKEEIKRIENFILNTGRDKDIDRDSFQSFCRKIVRDTYTYDQVNFEKVFNKKNATTMDKFIAVDPSTIFYATDKNGKIIKGGKRFVQVINKKVVASFTSREMAMGIRNPRTELSSSGYGLSEVEIAMKQFIAYNNTETFNDRFFSHGGTTRGILQIKSEQQQSQRALENFKREWKSSFSGINGSWQVPVVMADDIKFVNMTPTANDMQFEKWLTYLINIISALYGIDPAEIGFPNRGGATGGKGGNTLNEADPGKKQQQSQNKGLQPLLRFIEDLINTHIISEYSDKYVFQFVGGDTKSELDKIKILQEEVKTYKTVNEARKEKGLKPIEGGDVLLDGSFIQSMSLNTQKEQYEDTKQKERFDMIQQFLNSPDDEEPQQESTEDKVDGRESNDPTKIDSPVGTDGQLKDQDNVKSQEGSNKGQGTKGKGNEKPSDFKNN.

Disordered stretches follow at residues 374–399 (GGAT…QSQN) and 506–576 (LNSP…FKNN). Basic and acidic residues-rich tracts occupy residues 519–533 (TEDK…DPTK) and 565–576 (KGNEKPSDFKNN).

It belongs to the phage portal family. As to quaternary structure, homododecamer.

It localises to the virion. In terms of biological role, forms the portal vertex of the capsid. This portal plays critical roles in head assembly, genome packaging, neck/tail attachment, and genome ejection. The portal protein multimerizes as a single ring-shaped homododecamer arranged around a central channel. Binds to the terminase subunits to form the packaging machine. The polypeptide is Probable portal protein (Twortvirus twort (Bacteriophage Twort)).